The primary structure comprises 71 residues: Plasticin-DA1 (71 aa).

The signal sequence occupies residues 1–22 (MAFLKKSLFLVLFLALVPLSIC). Residues 23 to 42 (EAEKREEENEEKQEDDDESE) constitute a propeptide that is removed on maturation. Residues 25-45 (EKREEENEEKQEDDDESEKKR) form a disordered region. The span at 30–40 (ENEEKQEDDDE) shows a compositional bias: acidic residues. G68 carries the post-translational modification Glycine amide. A propeptide spanning residues 70-71 (ER) is cleaved from the precursor.

The protein belongs to the frog skin active peptide (FSAP) family. Plasticin subfamily. Expressed by the skin glands.

The protein resides in the secreted. It localises to the target cell membrane. In terms of biological role, neutral peptide with no antimicrobial activity. Does not permeate bacterial membranes. May act in synergy with cationic peptides by enhancing their activity. Has a moderate hemolytic activity. It interacts with zwitterionic phospholipids (DMPC) without perturbing either the interface or inside of the bilayer, whereas it causes little perturbations at the interface peptide-anionic vesicles (DMPG) as well as in the bilayer alkyl chains. This chain is Plasticin-DA1, found in Agalychnis dacnicolor (Giant Mexican leaf frog).